The following is a 658-amino-acid chain: Protein CFAP20DC (658 aa).

Disordered stretches follow at residues 312–522 (QQGE…EEEY) and 589–634 (PVNQ…LDSS). A compositionally biased stretch (polar residues) spans 319–328 (SHPVKQTTPL). The span at 339–349 (PPRDPSADKGS) shows a compositional bias: basic and acidic residues. Composition is skewed to low complexity over residues 351–363 (RRGLGLRSSSGSR) and 417–434 (SSGPPSGAAGSSSSLLLD). The segment covering 494–506 (DPKEDSRVTKGDT) has biased composition (basic and acidic residues). The segment covering 507–521 (ELEDDFYGSDSSEEE) has biased composition (acidic residues). Positions 625-634 (QPLEQSLDSS) are enriched in polar residues.

The sequence is that of Protein CFAP20DC from Rattus norvegicus (Rat).